Consider the following 485-residue polypeptide: Glycogen synthase (485 aa).

Lys-20 serves as a coordination point for ADP-alpha-D-glucose.

This sequence belongs to the glycosyltransferase 1 family. Bacterial/plant glycogen synthase subfamily.

The catalysed reaction is [(1-&gt;4)-alpha-D-glucosyl](n) + ADP-alpha-D-glucose = [(1-&gt;4)-alpha-D-glucosyl](n+1) + ADP + H(+). It participates in glycan biosynthesis; glycogen biosynthesis. Functionally, synthesizes alpha-1,4-glucan chains using ADP-glucose. The chain is Glycogen synthase from Vibrio vulnificus (strain YJ016).